A 123-amino-acid polypeptide reads, in one-letter code: cAMP-responsive element-binding protein-like 2 (123 aa).

Residues 1 to 24 are disordered; the sequence is MDDSKVVGGKVKKPGKRGRKPAKI. A compositionally biased stretch (basic residues) spans 10–21; sequence KVKKPGKRGRKP. A bZIP domain is found at 23 to 86; that stretch reads KIDLKAKLER…MAMDQGKIPS (64 aa). The basic motif stretch occupies residues 29-60; that stretch reads KLERSRQSARECRARKKLRYQYLEELVSSRER. The leucine-zipper stretch occupies residues 62–69; that stretch reads ICALREEL. Residues 93–123 form a disordered region; the sequence is TGEEQNKSQQNSSRHPKAGKTDANTNSLVGN. The span at 114–123 shows a compositional bias: polar residues; it reads DANTNSLVGN.

The protein belongs to the bZIP family. ATF subfamily. Interacts with CREB1; regulates CREB1 phosphorylation, stability and transcriptional activity. In terms of processing, phosphorylated by AMPK.

Its subcellular location is the nucleus. Its function is as follows. Probable regulator of CREB1 transcriptional activity which is involved in adipose cells differentiation. May also play a regulatory role in the cell cycle. In Rattus norvegicus (Rat), this protein is cAMP-responsive element-binding protein-like 2 (Crebl2).